A 419-amino-acid chain; its full sequence is Phosphatidylcholine:ceramide cholinephosphotransferase 1 (419 aa).

An SAM domain is found at 13–76; sequence WSPKKVADWL…LDMIETLKME (64 aa). S14 is modified (phosphoserine). 5 helical membrane passes run 142 to 162, 190 to 210, 221 to 241, 282 to 302, and 310 to 330; these read LLAFLYALSCFVLTTVMISVV, FSICEINGMILVGLWLFQWLL, FFCIVGTLYLYRCITMYVTTL, MCGDYLYSGHTVMLTLTYLFI, and LWWYHWICWLLSVVGIFCILL. H291 is a catalytic residue. Topologically, residues 331-419 are cytoplasmic; sequence AHDHYTVDVV…VKYSRLVNDT (89 aa). Active-site residues include H334 and D338.

The protein belongs to the sphingomyelin synthase family.

The protein localises to the golgi apparatus membrane. The catalysed reaction is an N-acylsphing-4-enine + a 1,2-diacyl-sn-glycero-3-phosphocholine = a sphingomyelin + a 1,2-diacyl-sn-glycerol. The enzyme catalyses 1-(9Z-octadecenoyl)-2-acyl-sn-3-glycerol + a sphingomyelin = a 1-(9Z-octadecenoyl)-2-acyl-sn-glycero-3-phosphocholine + an N-acylsphing-4-enine. It carries out the reaction N-hexadecanoylsphinganine + a 1,2-diacyl-sn-glycero-3-phosphocholine = N-hexadecanoyl-sphinganine-1-phosphocholine + a 1,2-diacyl-sn-glycerol. It catalyses the reaction N-hexadecanoyl-(4R)-hydroxysphinganine + a 1,2-diacyl-sn-glycero-3-phosphocholine = N-hexadecanoyl-(4R)-hydroxysphinganine-phosphocholine + a 1,2-diacyl-sn-glycerol. The catalysed reaction is an N-acylsphing-4-enine + a 1,2-diacyl-sn-glycero-3-phosphoethanolamine = an N-acylsphing-4-enine 1-phosphoethanolamine + a 1,2-diacyl-sn-glycerol. It participates in sphingolipid metabolism. In terms of biological role, major sphingomyelin synthase at the Golgi apparatus. Catalyzes the reversible transfer of phosphocholine moiety in sphingomyelin biosynthesis: in the forward reaction transfers phosphocholine head group of phosphatidylcholine (PC) on to ceramide (CER) to form ceramide phosphocholine (sphingomyelin, SM) and diacylglycerol (DAG) as by-product, and in the reverse reaction transfers phosphocholine from SM to DAG to form PC and CER. The direction of the reaction depends on the levels of CER and DAG in Golgi membranes. Converts the newly synthesized CER, that is transported from the endoplasmic reticulum to the trans-Golgi by the Cer transport protein (CERT), to SM. Can form a heteromeric complex with glucosylceramide synthase (GCS) increasing SMS activity and reducing glucosylceramide synthesis, a critical mechanism that controls the metabolic fate of CER in the Golgi. Does not use free phosphorylcholine or CDP-choline as donor. Can also transfer phosphoethanolamine head group of phosphatidylethanolamine (PE) on to CER to form ceramide phosphoethanolamine (CPE). Regulates receptor-mediated signal transduction via mitogenic DAG and proapoptotic CER, as well as via SM, a structural component of membrane rafts that serve as platforms for signal transduction and protein sorting. Plays a role in secretory transport via regulation of DAG pool at the Golgi apparatus and its downstream effects on PRKD1. In Rattus norvegicus (Rat), this protein is Phosphatidylcholine:ceramide cholinephosphotransferase 1 (Sgms1).